The primary structure comprises 559 residues: MRKFAYCKVVLATSLIWVLLDMFLLLYFSECNKCDEKKERGLPAGDVLEPVQKPHEGPGEMGKPVVIPKEDQEKMKEMFKINQFNLMASEMIALNRSLPDVRLEGCKTKVYPDNLPTTSVVIVFHNEAWSTLLRTVHSVINRSPRHMIEEIVLVDDASERDFLKRPLESYVKKLKVPVHVIRMEQRSGLIRARLKGAAVSKGQVITFLDAHCECTVGWLEPLLARIKHDRRTVVCPIIDVISDDTFEYMAGSDMTYGGFNWKLNFRWYPVPQREMDRRKGDRTLPVRTPTMAGGLFSIDRDYFQEIGTYDAGMDIWGGENLEISFRIWQCGGTLEIVTCSHVGHVFRKATPYTFPGGTGQIINKNNRRLAEVWMDEFKNFFYIISPGVTKVDYGDISSRVGLRHKLQCKPFSWYLENIYPDSQIPRHYFSLGEIRNVETNQCLDNMARKENEKVGIFNCHGMGGNQVFSYTANKEIRTDDLCLDVSKLNGPVTMLKCHHLKGNQLWEYDPVKLTLQHVNSNQCLDKATEEDSQVPSIRDCNGSRSQQWLLRNVTLPEIF.

Over 1-8 (MRKFAYCK) the chain is Cytoplasmic. Residues 9–28 (VVLATSLIWVLLDMFLLLYF) traverse the membrane as a helical; Signal-anchor for type II membrane protein segment. Residues 29–559 (SECNKCDEKK…LRNVTLPEIF (531 aa)) are Lumenal-facing. Residues 45 to 65 (GDVLEPVQKPHEGPGEMGKPV) are disordered. An N-linked (GlcNAc...) asparagine glycan is attached at asparagine 95. 5 disulfide bridges follow: cysteine 106-cysteine 339, cysteine 330-cysteine 408, cysteine 442-cysteine 459, cysteine 482-cysteine 497, and cysteine 523-cysteine 540. A catalytic subdomain A region spans residues 115 to 225 (LPTTSVVIVF…VGWLEPLLAR (111 aa)). Substrate-binding residues include aspartate 156 and arginine 186. The Mn(2+) site is built by aspartate 209 and histidine 211. A catalytic subdomain B region spans residues 285–347 (PVRTPTMAGG…TCSHVGHVFR (63 aa)). Tryptophan 316 contacts substrate. Position 344 (histidine 344) interacts with Mn(2+). 2 residues coordinate substrate: arginine 347 and tyrosine 352. In terms of domain architecture, Ricin B-type lectin spans 429 to 551 (FSLGEIRNVE…GSRSQQWLLR (123 aa)). An N-linked (GlcNAc...) asparagine glycan is attached at asparagine 552.

Belongs to the glycosyltransferase 2 family. GalNAc-T subfamily. Mn(2+) serves as cofactor. As to expression, widely expressed. Expressed in all tissues tested.

The protein localises to the golgi apparatus. It is found in the golgi stack membrane. The protein resides in the secreted. The catalysed reaction is L-seryl-[protein] + UDP-N-acetyl-alpha-D-galactosamine = a 3-O-[N-acetyl-alpha-D-galactosaminyl]-L-seryl-[protein] + UDP + H(+). It catalyses the reaction L-threonyl-[protein] + UDP-N-acetyl-alpha-D-galactosamine = a 3-O-[N-acetyl-alpha-D-galactosaminyl]-L-threonyl-[protein] + UDP + H(+). It functions in the pathway protein modification; protein glycosylation. Functionally, catalyzes the initial reaction in O-linked oligosaccharide biosynthesis, the transfer of an N-acetyl-D-galactosamine residue to a serine or threonine residue on the protein receptor. Has a broad spectrum of substrates such as apomucin-, MUC5AC-, MUC1- and MUC2-derived peptides. The protein is Polypeptide N-acetylgalactosaminyltransferase 1 of Homo sapiens (Human).